A 505-amino-acid polypeptide reads, in one-letter code: AMP phosphorylase (505 aa).

AMP contacts are provided by residues G169, 195 to 200, and T204; that span reads SRAITG. D257 acts as the Proton donor in catalysis. 2 residues coordinate AMP: S265 and K289.

It belongs to the thymidine/pyrimidine-nucleoside phosphorylase family. Type 2 subfamily.

It carries out the reaction AMP + phosphate = alpha-D-ribose 1,5-bisphosphate + adenine. It catalyses the reaction CMP + phosphate = cytosine + alpha-D-ribose 1,5-bisphosphate. The enzyme catalyses UMP + phosphate = alpha-D-ribose 1,5-bisphosphate + uracil. Functionally, catalyzes the conversion of AMP and phosphate to adenine and ribose 1,5-bisphosphate (R15P). Exhibits phosphorylase activity toward CMP and UMP in addition to AMP. Functions in an archaeal AMP degradation pathway, together with R15P isomerase and RubisCO. This Methanocorpusculum labreanum (strain ATCC 43576 / DSM 4855 / Z) protein is AMP phosphorylase.